The primary structure comprises 414 residues: Histidine--tRNA ligase (414 aa).

The protein belongs to the class-II aminoacyl-tRNA synthetase family. In terms of assembly, homodimer.

Its subcellular location is the cytoplasm. It carries out the reaction tRNA(His) + L-histidine + ATP = L-histidyl-tRNA(His) + AMP + diphosphate + H(+). This is Histidine--tRNA ligase from Endomicrobium trichonymphae.